Reading from the N-terminus, the 216-residue chain is ATP phosphoribosyltransferase (216 aa).

It belongs to the ATP phosphoribosyltransferase family. Short subfamily. In terms of assembly, heteromultimer composed of HisG and HisZ subunits.

It localises to the cytoplasm. The enzyme catalyses 1-(5-phospho-beta-D-ribosyl)-ATP + diphosphate = 5-phospho-alpha-D-ribose 1-diphosphate + ATP. The protein operates within amino-acid biosynthesis; L-histidine biosynthesis; L-histidine from 5-phospho-alpha-D-ribose 1-diphosphate: step 1/9. Functionally, catalyzes the condensation of ATP and 5-phosphoribose 1-diphosphate to form N'-(5'-phosphoribosyl)-ATP (PR-ATP). Has a crucial role in the pathway because the rate of histidine biosynthesis seems to be controlled primarily by regulation of HisG enzymatic activity. In Streptococcus thermophilus (strain ATCC BAA-491 / LMD-9), this protein is ATP phosphoribosyltransferase.